The primary structure comprises 94 residues: DNA-directed RNA polymerase subunit Rpo11 (94 aa).

Belongs to the archaeal Rpo11/eukaryotic RPB11/RPC19 RNA polymerase subunit family. In terms of assembly, part of the RNA polymerase complex.

The protein resides in the cytoplasm. The enzyme catalyses RNA(n) + a ribonucleoside 5'-triphosphate = RNA(n+1) + diphosphate. Functionally, DNA-dependent RNA polymerase (RNAP) catalyzes the transcription of DNA into RNA using the four ribonucleoside triphosphates as substrates. The sequence is that of DNA-directed RNA polymerase subunit Rpo11 from Haloarcula marismortui (strain ATCC 43049 / DSM 3752 / JCM 8966 / VKM B-1809) (Halobacterium marismortui).